Here is a 239-residue protein sequence, read N- to C-terminus: MARLGVNIDHVATLRQARGGTEPDPVAAAAIAEFAGADGITIHLREDRRHIQDRDLKILRQTVQTRLNLEMAATDEMVAIALSVKPEACTLVPEKRAELTTEGGLDVRIHQEALKLAIEKLQAGGIIVSLFIDPDPDQIKVANKIGADYIEIHTGSFAEAKSWKEEELELIKIENAVKLARKLDLGVNAGHGLNYNNVKKVAAIGGIEEFNIGHSIMSRAILVGLDRAVRDMSELVRYA.

Asparagine 7 provides a ligand contact to 3-amino-2-oxopropyl phosphate. A 1-deoxy-D-xylulose 5-phosphate-binding site is contributed by 9–10; sequence DH. Arginine 18 contributes to the 3-amino-2-oxopropyl phosphate binding site. The active-site Proton acceptor is the histidine 43. 1-deoxy-D-xylulose 5-phosphate contacts are provided by arginine 45 and histidine 50. Glutamate 70 acts as the Proton acceptor in catalysis. 1-deoxy-D-xylulose 5-phosphate is bound at residue threonine 100. Histidine 191 serves as the catalytic Proton donor. 3-amino-2-oxopropyl phosphate-binding positions include glycine 192 and 213–214; that span reads GH.

The protein belongs to the PNP synthase family. As to quaternary structure, homooctamer; tetramer of dimers.

The protein localises to the cytoplasm. It catalyses the reaction 3-amino-2-oxopropyl phosphate + 1-deoxy-D-xylulose 5-phosphate = pyridoxine 5'-phosphate + phosphate + 2 H2O + H(+). The protein operates within cofactor biosynthesis; pyridoxine 5'-phosphate biosynthesis; pyridoxine 5'-phosphate from D-erythrose 4-phosphate: step 5/5. In terms of biological role, catalyzes the complicated ring closure reaction between the two acyclic compounds 1-deoxy-D-xylulose-5-phosphate (DXP) and 3-amino-2-oxopropyl phosphate (1-amino-acetone-3-phosphate or AAP) to form pyridoxine 5'-phosphate (PNP) and inorganic phosphate. This Geobacter sp. (strain M21) protein is Pyridoxine 5'-phosphate synthase.